A 284-amino-acid chain; its full sequence is 2-dehydro-3-deoxyphosphooctonate aldolase (284 aa).

This sequence belongs to the KdsA family.

Its subcellular location is the cytoplasm. The enzyme catalyses D-arabinose 5-phosphate + phosphoenolpyruvate + H2O = 3-deoxy-alpha-D-manno-2-octulosonate-8-phosphate + phosphate. The protein operates within carbohydrate biosynthesis; 3-deoxy-D-manno-octulosonate biosynthesis; 3-deoxy-D-manno-octulosonate from D-ribulose 5-phosphate: step 2/3. Its pathway is bacterial outer membrane biogenesis; lipopolysaccharide biosynthesis. This chain is 2-dehydro-3-deoxyphosphooctonate aldolase, found in Sodalis glossinidius (strain morsitans).